Reading from the N-terminus, the 278-residue chain is Poly(3-hydroxyoctanoate) depolymerase (278 aa).

An N-terminal signal peptide occupies residues 1-33 (MPLRTLLCGLLLAVCLGQHALAASRCSERPRTL).

The protein localises to the secreted. The catalysed reaction is Hydrolyzes the polyester poly{oxycarbonyl[(R)-2-pentylethylene]} to oligomers.. Functionally, hydrolysis of poly(3-hydroxyoctanoic acid). This Pseudomonas fluorescens protein is Poly(3-hydroxyoctanoate) depolymerase (phaZ).